Here is a 526-residue protein sequence, read N- to C-terminus: Phenylacetaldehyde oxime monooxygenase CYP71AN24 (526 aa).

The chain crosses the membrane as a helical span at residues 22–42 (SFNIFLVPILCLSIFILFSLT). C465 provides a ligand contact to heme.

The protein belongs to the cytochrome P450 family. Requires heme as cofactor. Expressed in seedlings and leaves.

The protein resides in the membrane. It catalyses the reaction (E)-phenylacetaldehyde oxime + reduced [NADPH--hemoprotein reductase] + O2 = (R)-mandelonitrile + oxidized [NADPH--hemoprotein reductase] + 2 H2O + H(+). The enzyme catalyses phenylacetonitrile + reduced [NADPH--hemoprotein reductase] + O2 = (R)-mandelonitrile + oxidized [NADPH--hemoprotein reductase] + H2O + H(+). Functionally, involved in L-phenylalanine-derived cyanogenic glycoside biosynthesis, including prunasin and amygdalin defensive agents. Catalyzes the conversion of phenylacetaldoxime (PAOx) and phenylacetonitrile (PAN) into mandelonitrile (MAN). To a lower extent, can convert various aromatic aldoximes and nitriles; mediates the transformation of 4-hydroxyphenylacetaldoxime, 4-hydroxyphenylacetonitrile, indole-3-acetal-doxime and indole-3-acetonitrile into the corresponding hydroxynitriles, but cannot use the aliphatic compounds 2-methylpropanaloxime and 2-methylpropanenitrile as substrates. In Prunus mume (Japanese apricot), this protein is Phenylacetaldehyde oxime monooxygenase CYP71AN24.